Consider the following 483-residue polypeptide: Lipoamide acyltransferase component of branched-chain alpha-keto acid dehydrogenase complex, mitochondrial (483 aa).

The transit peptide at 1–75 (MIARRIWRSH…AMATDSNSGL (75 aa)) directs the protein to the mitochondrion. The Lipoyl-binding domain maps to 76–150 (IDVPLAQTGE…KVGETLVRLA (75 aa)). Lys-116 carries the post-translational modification N6-lipoyllysine. The Peripheral subunit-binding (PSBD) domain occupies 183-220 (LSTPAVRNLAKDLGIDINVITGTGKDGRVLKEDVLRFS). Catalysis depends on residues His-453 and Asp-457.

This sequence belongs to the 2-oxoacid dehydrogenase family. As to quaternary structure, forms a 24-polypeptide structural core with octahedral symmetry. (R)-lipoate is required as a cofactor. As to expression, expressed in the non-photosynthetic organs such as siliques, flowers and roots.

It is found in the mitochondrion matrix. The catalysed reaction is N(6)-[(R)-dihydrolipoyl]-L-lysyl-[protein] + 2-methylpropanoyl-CoA = N(6)-[(R)-S(8)-2-methylpropanoyldihydrolipoyl]-L-lysyl-[protein] + CoA. Its function is as follows. The branched-chain alpha-keto dehydrogenase complex catalyzes the overall conversion of alpha-keto acids to acyl-CoA and CO(2). It contains multiple copies of three enzymatic components: branched-chain alpha-keto acid decarboxylase (E1), lipoamide acyltransferase (E2) and lipoamide dehydrogenase (E3). Within this complex, the catalytic function of this enzyme is to accept, and to transfer to coenzyme A, acyl groups that are generated by the branched-chain alpha-keto acid decarboxylase component. Required during sugar starvation and acts under the control of a sugar-sensing mechanism involving Ser/Thr kinases and phosphatases. This Arabidopsis thaliana (Mouse-ear cress) protein is Lipoamide acyltransferase component of branched-chain alpha-keto acid dehydrogenase complex, mitochondrial (BCE2).